The chain runs to 253 residues: 2,3-bisphosphoglycerate-dependent phosphoglycerate mutase (253 aa).

Substrate contacts are provided by residues 12–19 (RHGESEWN), 25–26 (TG), arginine 64, 91–94 (ERHY), lysine 102, and 118–119 (RR). Catalysis depends on histidine 13, which acts as the Tele-phosphohistidine intermediate. Glutamate 91 serves as the catalytic Proton donor/acceptor. The disordered stretch occupies residues 126–148 (PPLADGSEFSQSDDPRYASIPPE). Position 187–188 (187–188 (GN)) interacts with substrate.

This sequence belongs to the phosphoglycerate mutase family. BPG-dependent PGAM subfamily.

The catalysed reaction is (2R)-2-phosphoglycerate = (2R)-3-phosphoglycerate. Its pathway is carbohydrate degradation; glycolysis; pyruvate from D-glyceraldehyde 3-phosphate: step 3/5. In terms of biological role, catalyzes the interconversion of 2-phosphoglycerate and 3-phosphoglycerate. The chain is 2,3-bisphosphoglycerate-dependent phosphoglycerate mutase from Streptomyces avermitilis (strain ATCC 31267 / DSM 46492 / JCM 5070 / NBRC 14893 / NCIMB 12804 / NRRL 8165 / MA-4680).